Consider the following 199-residue polypeptide: Transcription factor 15 (199 aa).

The segment at 25–67 (EENRSESDASDQSFGCCEGPEAARRGPGPGGGRRAGGGGGAGP) is disordered. Residues 51-66 (PGPGGGRRAGGGGGAG) are compositionally biased toward gly residues. In terms of domain architecture, bHLH spans 72 to 124 (RQRQAANARERDRTQSVNTAFTALRTLIPTEPVDRKLSKIETVRLASSYIAHL).

As to quaternary structure, heterodimer; efficient DNA binding requires dimerization with another bHLH protein, such as TCF3/E12. Interacts with MEOX2.

It is found in the nucleus. Its function is as follows. Early transcription factor that plays a key role in somitogenesis, paraxial mesoderm development and regulation of stem cell pluripotency. Essential for the mesenchymal to epithelial transition associated with somite formation. Required for somite morphogenesis, thereby regulating patterning of the axial skeleton and skeletal muscles. Required for proper localization of somite epithelium markers during the mesenchymal to epithelial transition. Also plays a key role in regulation of stem cell pluripotency. Promotes pluripotency exit of embryonic stem cells (ESCs) by priming ESCs for differentiation. Acts as a key regulator of self-renewal of hematopoietic stem cells (HSCs) by mediating HSCs quiescence and long-term self-renewal. Together with MEOX2, regulates transcription in heart endothelial cells to regulate fatty acid transport across heart endothelial cells. Acts by forming a heterodimer with another helix-loop-helix (bHLH) protein, such as TCF3/E12, that binds DNA on E-box motifs (5'-CANNTG-3') and activates transcription of target genes. This is Transcription factor 15 from Homo sapiens (Human).